Consider the following 257-residue polypeptide: Sad1-interacting factor 1 (257 aa).

Positions 16-68 are disordered; it reads LNKIKQGGASRINQILGQNSDDSQSDVRATASEEAVHSETATPVTPMSSGFME. Composition is skewed to polar residues over residues 26-37 and 54-63; these read RINQILGQNSDD and ETATPVTPMS. Position 35 is a phosphoserine (S35). The residue at position 132 (S132) is a Phosphoserine. T134 carries the post-translational modification Phosphothreonine. 2 helical membrane passes run 160 to 180 and 231 to 251; these read LLAI…LLPW and FTQL…CCYF.

As to quaternary structure, interacts with kms1 and sad1.

The protein localises to the membrane. This is Sad1-interacting factor 1 (sif1) from Schizosaccharomyces pombe (strain 972 / ATCC 24843) (Fission yeast).